We begin with the raw amino-acid sequence, 185 residues long: UPF0301 protein HDEF_0602 (185 aa).

It belongs to the UPF0301 (AlgH) family.

In Hamiltonella defensa subsp. Acyrthosiphon pisum (strain 5AT), this protein is UPF0301 protein HDEF_0602.